Here is a 161-residue protein sequence, read N- to C-terminus: Copper transporter 1 (161 aa).

The next 2 helical transmembrane spans lie at 55-75 and 109-129; these read GGMY…VEFL and VAYL…LVAV.

It belongs to the copper transporter (Ctr) (TC 1.A.56) family. SLC31A subfamily. As to quaternary structure, self-interacts. Interacts with SWEET11 and COPT2.

Its subcellular location is the cell membrane. Its function is as follows. Involved in the transport of copper, in cooperation with SWEET11 and COPT2. Contributes to the removal of copper (Cu) from xylem, and thus to the sensitivity toward bacterial pathogens such as X.oryzae pv. oryzae (Xoo). This Oryza sativa subsp. japonica (Rice) protein is Copper transporter 1 (COPT1).